Reading from the N-terminus, the 126-residue chain is MSASGRPQPMGRLTTHVLDSAHGCPGHGIKIELYRVEGQQLELIATTLTNHDGRCDQPVLQGEDFRPGVYQLVFNAGDYYRARGVQLPEPAFLDQVVLRFGIASADDHYHVPLLISPYSYSTYRGS.

Substrate is bound by residues His-16, Arg-54, and Tyr-123.

Belongs to the transthyretin family. 5-hydroxyisourate hydrolase subfamily. As to quaternary structure, homotetramer.

The catalysed reaction is 5-hydroxyisourate + H2O = 5-hydroxy-2-oxo-4-ureido-2,5-dihydro-1H-imidazole-5-carboxylate + H(+). Its function is as follows. Catalyzes the hydrolysis of 5-hydroxyisourate (HIU) to 2-oxo-4-hydroxy-4-carboxy-5-ureidoimidazoline (OHCU). The sequence is that of 5-hydroxyisourate hydrolase from Pseudomonas aeruginosa (strain ATCC 15692 / DSM 22644 / CIP 104116 / JCM 14847 / LMG 12228 / 1C / PRS 101 / PAO1).